The sequence spans 143 residues: MFIGEYNHSIDSKGRLSVPSRFREELGDRFILTKGLDNCLFVYSMDEWKVLEDKLKKLPLTNRDARAFVRFFFSGATECELDNQGRIRIPNNLRSHAYLEKEVIVIGVATRIEIWSSDQWGQYNDDSNLSYDEIANRMEELGI.

SpoVT-AbrB domains lie at 5-47 (EYNH…SMDE) and 76-119 (ATEC…SSDQ).

It belongs to the MraZ family. As to quaternary structure, forms oligomers.

Its subcellular location is the cytoplasm. The protein resides in the nucleoid. This chain is Transcriptional regulator MraZ, found in Alkaliphilus metalliredigens (strain QYMF).